Here is a 600-residue protein sequence, read N- to C-terminus: MLRTHLAGELRPDNIGDEVTLTGWVGRRRDHGGVIFIDLRDRSGVAQVVFRESEVAERAHDLRSEYCLKVTGVVEARPEGSENPNLASGGIEVNVSALEVLNEAAALPFQIDDPSTSGEVGEETRLKYRYLDLRRKTQGDALRLRSRVNQAARGVLAEHDFTEIETPTLTRSTPEGARDFLVPARLRPGTFYALPQSPQLFKQLLMVAGMERYYQIARCYRDEDFRADRQPEFTQLDVEMSFVDQEDVISLAEEILVAIWKEIGYEISTPIPRMTYADAMKYYGSDKPDLRFDIQITECTDFFKNTTFRVFQNEYVGAVVMEGGADQPRRQLDAWQEWAKQRGAKGLAYILVGEDGELSGPVAKNITDEERAGIAEHVGAKPGDCIFFAAGETKPSRALLGAARGEIANKLGLIKEGDWAFTWVVDAPLFEPAADATASGDVALGHSAWTAVHHAFTSPKPEYLDNFDENPGEALAYAYDIVCNGNEIGGGSIRIHQPDVQERVFKVMGITEEEAREKFGFLLDAFAFGAPPHGGIAFGWDRIVSLLGGFDSIRDVIAFPKSGGGVDPLTDAPGEISAAQRKESGIDFKPKKGPQGQKEK.

Glu-175 lines the L-aspartate pocket. Residues 199–202 form an aspartate region; that stretch reads QLFK. Arg-221 serves as a coordination point for L-aspartate. ATP-binding positions include 221–223 and Gln-230; that span reads RDE. An L-aspartate-binding site is contributed by His-453. Glu-487 serves as a coordination point for ATP. Arg-494 contacts L-aspartate. 539–542 contributes to the ATP binding site; that stretch reads GWDR. Residues 578–600 are disordered; it reads AAQRKESGIDFKPKKGPQGQKEK. Positions 580–590 are enriched in basic and acidic residues; the sequence is QRKESGIDFKP.

Belongs to the class-II aminoacyl-tRNA synthetase family. Type 1 subfamily. As to quaternary structure, homodimer.

Its subcellular location is the cytoplasm. It catalyses the reaction tRNA(Asx) + L-aspartate + ATP = L-aspartyl-tRNA(Asx) + AMP + diphosphate. In terms of biological role, aspartyl-tRNA synthetase with relaxed tRNA specificity since it is able to aspartylate not only its cognate tRNA(Asp) but also tRNA(Asn). Reaction proceeds in two steps: L-aspartate is first activated by ATP to form Asp-AMP and then transferred to the acceptor end of tRNA(Asp/Asn). The chain is Aspartate--tRNA(Asp/Asn) ligase from Corynebacterium jeikeium (strain K411).